The sequence spans 298 residues: N-acetylmuramic acid 6-phosphate etherase (298 aa).

In terms of domain architecture, SIS spans 57 to 220; that stretch reads IAAAFGKGGR…STGAMIRTGK (164 aa). Catalysis depends on glutamate 85, which acts as the Proton donor. The active site involves glutamate 116.

Belongs to the GCKR-like family. MurNAc-6-P etherase subfamily. As to quaternary structure, homodimer.

The catalysed reaction is N-acetyl-D-muramate 6-phosphate + H2O = N-acetyl-D-glucosamine 6-phosphate + (R)-lactate. Its pathway is amino-sugar metabolism; 1,6-anhydro-N-acetylmuramate degradation. It participates in amino-sugar metabolism; N-acetylmuramate degradation. It functions in the pathway cell wall biogenesis; peptidoglycan recycling. Specifically catalyzes the cleavage of the D-lactyl ether substituent of MurNAc 6-phosphate, producing GlcNAc 6-phosphate and D-lactate. Together with AnmK, is also required for the utilization of anhydro-N-acetylmuramic acid (anhMurNAc) either imported from the medium or derived from its own cell wall murein, and thus plays a role in cell wall recycling. The chain is N-acetylmuramic acid 6-phosphate etherase from Aeromonas hydrophila subsp. hydrophila (strain ATCC 7966 / DSM 30187 / BCRC 13018 / CCUG 14551 / JCM 1027 / KCTC 2358 / NCIMB 9240 / NCTC 8049).